Consider the following 1606-residue polypeptide: MHPDVEQELAYTLLIELMAHQFAYPVRWIETQDHILGEVNAERIIEIGPSPILTNMMKRTIASRFSNSDQALNINRHLMSPDNGNPDIYYKYEPTEEPDLPELGSQSNTVKVSGSPAWEVQRPVTASHIPSGPVDEIEDTKVPVSAILISLLAPKLKKDPRAIPMTGTISNLVGGRSTLSNEIVGDLLAEFPNRVPDKPEEMPLSSLSETLSTSHDGQLGKATSALVMKMVSSRLPGGYSLSNARLYLREKWGLPPRRQDAVFLLALQRQPTSRLLSSTDVDSFLDANAAAYFGQENLSIPSRGSVQSAAPAVDAKALLLAKQQNDALLRDIMGVIQGHTAAKNESQDATLQASDSEAAATKKLDMWISEHGDDYAKGMAPIFDAKKQRIYDSYWNWNAQDTILLFQRKLQGQMSSVKELEQLSTSIVNRACGRTLEQLDYIIAQAERDPTVDSGLLKPMQLLRQTCVETQERQPVFINLSPDMAPLTTISSDGRLIFSEIPRALPCSKILSTNEASSIAFPVSRADGVAVSYSPQLTEILCHDLKDSRRSGFSFSGKNVLLTGAGEGSIGNHILRHLLAGGARVTVTTSSFSEKVTAMFQSIYARHGSKGSVLRVVPFNQGSHGDVQNLVKYIYADASWDLDFILPFAAISENGRDIEDLDSKSEIAHRAMLTNLVRLVGAVASQKRQRDTITRPATVVLPLSPNHGLLGNDGLYSESKRSLETLIPKWSSETWGSYIALAGVIIGWTRGTGLMDSNDVIAQAVESLGVRTFSAVEMAANIVSVMGGRFNAECQETPIIVDMGGGLGSVKNFKAKLTSARQELNAYAELKRLTAQESSRDKAYVATDAHAKTSKRLRGRANILLPLPKNLNYEVDIAPFAASLDGMVDLSRVVVITGFAELGPLGNSRTRWEMEESGTLSLEGCVEMAWLMGLITYHNGIDKKGDHYSGWVDTKTSDAICDDEIPGKYLEFMAKHSGIREVEPEISDNGYDPSKKESLIEVALQRDLAPFETSIETAETLKRQHGDKAIVTQDASSGNCQVQLKAGAVVMVPRASRFNRTVAGQIPLGWTAKRYGISDDIIEQVDPVTLFSLVCTVEALLCSGIIDPYEFYQHIHVSQFANCLGSSMGGLTSLRKMHRDRYLDRSVKSDLVQETFINTTGAWINMLLSSSSGPIRTPVGACASSLESLDTACDLIMLKKAKVCLVGGFEDFVEDLSYEFGCMKATCDTDAEYAAGRVPKEMSRPTASSRSGFVESQGCGVQVLTSAELALEMGLPIFGIVAYTSMAADKAGRSVPAPGKGVLTNAREKSTIPNPMLSLGYRKRLLELRRTQIYQNISDHLDILNSEIALFQESETASPGDLKAFRENRELRIRQDAQAQDAEVTFSLGNQFWKSQDAGDISPIRGSLAVWGLGIDDISVASLHGTSTVQNDLNETMVIQEQMKHLGRRQGNLLPCVCQKWLTGHSKGAAGAWMVNGCLQMMNTGLVPGNRNADNVDEKLREHRHLAFPNTNLQMDDIKACSVTSFGFGQKGGQALLVHPRYLFATIGRERYDGYISKRDKRWRKACFRLSEAMVQGNMVSKCIKTEAPYTSADGVAALLDPTARF.

A Carrier domain is found at 142–218 (VPVSAILISL…ETLSTSHDGQ (77 aa)). O-(pantetheine 4'-phosphoryl)serine is present on Ser-177. The region spanning 996-1539 (KESLIEVALQ…QKGGQALLVH (544 aa)) is the Ketosynthase family 3 (KS3) domain. Catalysis depends on for beta-ketoacyl synthase activity residues Cys-1182, His-1424, and His-1465.

The protein belongs to the thiolase-like superfamily. Fungal fatty acid synthetase subunit alpha family.

It carries out the reaction a fatty acyl-[ACP] + malonyl-[ACP] + H(+) = a 3-oxoacyl-[ACP] + holo-[ACP] + CO2. The protein operates within secondary metabolite biosynthesis. Functionally, fatty acid synthase; part of the gene cluster that mediates the biosynthesis of the cyclic tetrapeptide apicidin F (APF). The non-ribosomal peptide synthetase apf1 incorporates four different amino acids to produce apicidin F: L-phenylalanine, D-pipecolic acid (D-pip), N-methoxy-L-tryptophan and L-2-aminooctanedioic acid. L-Phenylalanine is the only proteinogenic amino acid directly used by apf1. The 3 other apf1 substrates are non-proteinogenic and have to be modified by other enzymes of the cluster. Lysine is converted to delta-1-pyrroline-5-carboxylate (P5C) which is reduced to L-pipecolic acid (L-pip) by apf3. L-pip is epimerized to D-pip, probably by apf1 activity, prior to incorporation. L-Tryptophan is N-oxidyzed by one of the cytochrome P450 monooxygenases (apf7 or apf8), and further methylated at the hydroxy group by the O-methyltransferase apf6 to yield N-methoxy-L-tryptophan. The synthesis of the fourth apf1 substrate is more complex. The fatty acid synthase apf5 is involved in the synthesis of the octanoic acid backbone of L-2-aminooctanedioic acid by fixing one acetyl-CoA unit and three malonyl-CoA units. Then one of the cytochrome P450 monooxygenases (apf7 or apf8) may oxidize this backbone to 2-oxooctanoic acid. The aminotransferase apf4 is predicted to catalyze the exchange of the keto group with an amino group. The next step would be the oxidation of 2-aminooctanoic acid by one of the cytochrome P450 monooxygenases (apf7 or apf8). The last step is the oxidation of 2-amino-8-hydroxyoctanoic acid to 2-aminooctanedioic acid is catalyzed by the FAD-dependent monooxygenase apf9. This Gibberella fujikuroi (strain CBS 195.34 / IMI 58289 / NRRL A-6831) (Bakanae and foot rot disease fungus) protein is Fatty acid synthase apf5.